We begin with the raw amino-acid sequence, 273 residues long: Phosphate import ATP-binding protein PstB 1 (273 aa).

In terms of domain architecture, ABC transporter spans 27 to 268; that stretch reads ISIEHLSLYY…PLKKQTEDYI (242 aa). 59–66 contacts ATP; the sequence is GPSGCGKS.

This sequence belongs to the ABC transporter superfamily. Phosphate importer (TC 3.A.1.7) family. In terms of assembly, the complex is composed of two ATP-binding proteins (PstB), two transmembrane proteins (PstC and PstA) and a solute-binding protein (PstS).

Its subcellular location is the cell inner membrane. It catalyses the reaction phosphate(out) + ATP + H2O = ADP + 2 phosphate(in) + H(+). Its function is as follows. Part of the ABC transporter complex PstSACB involved in phosphate import. Responsible for energy coupling to the transport system. The protein is Phosphate import ATP-binding protein PstB 1 of Vibrio cholerae serotype O1 (strain ATCC 39315 / El Tor Inaba N16961).